Here is a 186-residue protein sequence, read N- to C-terminus: Ran guanine nucleotide release factor (186 aa).

An interaction with RAN region spans residues D27–D70.

Belongs to the MOG1 family. Monomer. Interacts with RAN, both RAN-GTP and RAN-GDP. Competes with RCC1 for a common binding site on RAN and thereby inhibits RCC1-mediated nucleotide exchange. Forms a complex with RAN-GTP and RANBP1. Interacts with the cytoplasmic loop 2 of SCN5A.

The protein resides in the nucleus. It localises to the cytoplasm. Its subcellular location is the perinuclear region. The protein localises to the cell membrane. May regulate the intracellular trafficking of RAN. Promotes guanine nucleotide release from RAN and inhibits binding of new GTP by preventing the binding of the RAN guanine nucleotide exchange factor RCC1. Regulates the levels of GTP-bound RAN in the nucleus, and thereby plays a role in the regulation of RAN-dependent mitotic spindle dynamics. Enhances the expression of SCN5A at the cell membrane in cardiomyocytes. This chain is Ran guanine nucleotide release factor (RANGRF), found in Bos taurus (Bovine).